Here is a 423-residue protein sequence, read N- to C-terminus: Adenylosuccinate synthetase (423 aa).

Residues 12–18 and 40–42 each bind GTP; these read GDEGKGK and GHT. The active-site Proton acceptor is the Asp-13. The Mg(2+) site is built by Asp-13 and Gly-40. Residues 13–16, 38–41, Thr-129, Arg-143, Gln-221, Thr-236, and Arg-300 contribute to the IMP site; these read DEGK and NAGH. Residue His-41 is the Proton donor of the active site. Position 296–302 (296–302) interacts with substrate; that stretch reads SVTGRKR. GTP is bound by residues Arg-302 and 408-410; that span reads SVG.

Belongs to the adenylosuccinate synthetase family. In terms of assembly, homodimer. Mg(2+) serves as cofactor.

It localises to the cytoplasm. The catalysed reaction is IMP + L-aspartate + GTP = N(6)-(1,2-dicarboxyethyl)-AMP + GDP + phosphate + 2 H(+). Its pathway is purine metabolism; AMP biosynthesis via de novo pathway; AMP from IMP: step 1/2. Functionally, plays an important role in the de novo pathway of purine nucleotide biosynthesis. Catalyzes the first committed step in the biosynthesis of AMP from IMP. This chain is Adenylosuccinate synthetase, found in Bacteroides thetaiotaomicron (strain ATCC 29148 / DSM 2079 / JCM 5827 / CCUG 10774 / NCTC 10582 / VPI-5482 / E50).